Here is a 181-residue protein sequence, read N- to C-terminus: Thioredoxin M-type, chloroplastic (181 aa).

The N-terminal 67 residues, 1-67 (MAIENCLQLS…RQFRYSSVVC (67 aa)), are a transit peptide targeting the chloroplast. The Thioredoxin domain occupies 68-180 (KASEAVKEVQ…LTDSIEKYLS (113 aa)). Active-site nucleophile residues include Cys-104 and Cys-107. The cysteines at positions 104 and 107 are disulfide-linked.

This sequence belongs to the thioredoxin family. Plant M-type subfamily. Forms a complex with heterodimeric ferredoxin-thioredoxin reductase (FTR) and ferredoxin.

It is found in the plastid. Its subcellular location is the chloroplast. Its function is as follows. Participates in various redox reactions through the reversible oxidation of the active center dithiol to a disulfide. The M form is known to activate NADP-malate dehydrogenase. The sequence is that of Thioredoxin M-type, chloroplastic from Spinacia oleracea (Spinach).